We begin with the raw amino-acid sequence, 532 residues long: Probable cytochrome c oxidase subunit 1 (532 aa).

Helical transmembrane passes span 33 to 53 (IMYI…SLLF), 74 to 94 (VLIT…ALFG), 95 to 115 (GFGN…FPRL), 118 to 138 (ISFW…FVDG), 163 to 183 (MAIF…INLI), 200 to 220 (PLFV…MPVL), 252 to 272 (LFWF…FGIV), and 284 to 304 (IFGY…GFIV). His79 contributes to the Fe(II)-heme a binding site. Residues His258 and Tyr262 each coordinate Cu cation. Cu cation-binding residues include His307 and His308. 2 helical membrane-spanning segments follow: residues 318–338 (ALIY…IKIF) and 355–375 (MLFS…GIIL). His393 serves as a coordination point for heme a3. 3 consecutive transmembrane segments (helical) span residues 394 to 414 (FHYT…YYWF), 431 to 451 (FWIT…LGLA), and 473 to 493 (IGAG…FYTL). His395 serves as a coordination point for Fe(II)-heme a.

The protein belongs to the heme-copper respiratory oxidase family.

It is found in the cell membrane. It catalyses the reaction 4 Fe(II)-[cytochrome c] + O2 + 8 H(+)(in) = 4 Fe(III)-[cytochrome c] + 2 H2O + 4 H(+)(out). The protein operates within energy metabolism; oxidative phosphorylation. Functionally, cytochrome c oxidase is the component of the respiratory chain that catalyzes the reduction of oxygen to water. Subunits 1-3 form the functional core of the enzyme complex. CO I is the catalytic subunit of the enzyme. Electrons originating in cytochrome c are transferred via the copper A center of subunit 2 and heme A of subunit 1 to the bimetallic center formed by heme A3 and copper B. This is Probable cytochrome c oxidase subunit 1 (ctaD) from Rickettsia felis (strain ATCC VR-1525 / URRWXCal2) (Rickettsia azadi).